The sequence spans 150 residues: Large ribosomal subunit protein bL9 (150 aa).

The protein belongs to the bacterial ribosomal protein bL9 family.

Functionally, binds to the 23S rRNA. The protein is Large ribosomal subunit protein bL9 of Neisseria meningitidis serogroup A / serotype 4A (strain DSM 15465 / Z2491).